The chain runs to 759 residues: Phosphoribosylformylglycinamidine synthase subunit PurL (759 aa).

The active site involves His34. Tyr37 lines the ATP pocket. Glu95 contributes to the Mg(2+) binding site. Substrate is bound by residues 96–99 (SHNH) and Arg118. The active-site Proton acceptor is the His97. Asp119 lines the Mg(2+) pocket. Gln243 serves as a coordination point for substrate. Position 271 (Asp271) interacts with Mg(2+). 315–317 (ESQ) contacts substrate. Residues 388-422 (DGAPMNDLASESPTQPDRDLPDPEPSLDEAVESVV) form a disordered region. Residues Asp520 and Gly557 each contribute to the ATP site. Asn558 is a Mg(2+) binding site. Ser560 is a binding site for substrate.

It belongs to the FGAMS family. In terms of assembly, monomer. Part of the FGAM synthase complex composed of 1 PurL, 1 PurQ and 2 PurS subunits.

It localises to the cytoplasm. The catalysed reaction is N(2)-formyl-N(1)-(5-phospho-beta-D-ribosyl)glycinamide + L-glutamine + ATP + H2O = 2-formamido-N(1)-(5-O-phospho-beta-D-ribosyl)acetamidine + L-glutamate + ADP + phosphate + H(+). The protein operates within purine metabolism; IMP biosynthesis via de novo pathway; 5-amino-1-(5-phospho-D-ribosyl)imidazole from N(2)-formyl-N(1)-(5-phospho-D-ribosyl)glycinamide: step 1/2. Functionally, part of the phosphoribosylformylglycinamidine synthase complex involved in the purines biosynthetic pathway. Catalyzes the ATP-dependent conversion of formylglycinamide ribonucleotide (FGAR) and glutamine to yield formylglycinamidine ribonucleotide (FGAM) and glutamate. The FGAM synthase complex is composed of three subunits. PurQ produces an ammonia molecule by converting glutamine to glutamate. PurL transfers the ammonia molecule to FGAR to form FGAM in an ATP-dependent manner. PurS interacts with PurQ and PurL and is thought to assist in the transfer of the ammonia molecule from PurQ to PurL. This chain is Phosphoribosylformylglycinamidine synthase subunit PurL, found in Halorubrum lacusprofundi (strain ATCC 49239 / DSM 5036 / JCM 8891 / ACAM 34).